The chain runs to 495 residues: MVMEVDEPAVAATTSQNQPQEHANDFDMDTSEGPIENDETFEPVDQINWKFNQVKGNIDADVHTEADVISCVEFSHDGEYLATGDKGGRVVIFQRDQSGKYVKGVRSREYNVYSTFQSHEPEFDYLKSLEIDEKINQIRWLKKKNAANFILSTNDKTIKLWKISERERKIGDDAWNLPRTNRINTSSFRGRLQIPSIVPMELIVEASPRRVYGNAHTYHVNSISVNSDQETFLSADDLRVNLWNLEITNESFNIVDIKPANMEELTEVITAAEFHPTQCNWFVYSSSKGSIRLCDMRDRALCDAYAKIFEEPEDPQSRSFFSEIIASVSDVKFSHNGRYLLTRDYLTVKVWDLNMESQPVETYPVHNYLRTKLCALYENDSIFDKFECDWSGDDKHILTGSYHNLFRSYARGNNQDAKTWEARPQEPHSQLRSRFVVPSAKRKRNNLSSSGETTEEDLSSDQLQFDRKILHTAWHPKDNIIALAATNNLYIFSDV.

Residues M1–D27 are disordered. A compositionally biased stretch (polar residues) spans A12 to E21. 6 WD repeats span residues T64–K103, E130–G171, A215–N253, E264–A304, E323–E361, and E378–T419. The interval S439–S459 is disordered. A WD 7 repeat occupies Q464–V495.

It belongs to the phosphatase 2A regulatory subunit B family. Part of a complex consisting of a common heterodimeric core enzyme, composed of catalytic subunit let-92 and constant regulatory subunit paa-1, that associates with a variety of regulatory subunits which confer distinct properties to the holoenzyme. Interacts with let-92.

The protein localises to the cytoplasm. Functionally, probable regulatory subunit of serine/threonine phosphatase let-92. Together with let-92 and constant regulatory subunit paa-1, positively regulates centriole duplication during early embryonic cell divisions by preventing the degradation of sas-5 and kinase zyg-1. In addition, during vulva development, may play a role with phosphatase let-92 and regulatory subunit paa-1 in the induction of vulva cell precursors by positively regulating let-60/Ras-MAP kinase signaling, probably by promoting lin-45 activation. In intestinal epithelial cells, may play a role in the late secretory pathway probably by regulating the exocyst, a protein complex involved in targeting secretory vesicles to the plasma membrane. The polypeptide is Serine/threonine-protein phosphatase 2A regulatory subunit sur-6 (Caenorhabditis elegans).